The chain runs to 141 residues: Large ribosomal subunit protein uL11 (141 aa).

The protein belongs to the universal ribosomal protein uL11 family. In terms of assembly, part of the ribosomal stalk of the 50S ribosomal subunit. Interacts with L10 and the large rRNA to form the base of the stalk. L10 forms an elongated spine to which L12 dimers bind in a sequential fashion forming a multimeric L10(L12)X complex. In terms of processing, one or more lysine residues are methylated.

Functionally, forms part of the ribosomal stalk which helps the ribosome interact with GTP-bound translation factors. The polypeptide is Large ribosomal subunit protein uL11 (Alkaliphilus metalliredigens (strain QYMF)).